A 169-amino-acid polypeptide reads, in one-letter code: Putative adenylate kinase (169 aa).

The ATP site is built by G10, G12, K13, T14, and T15. The tract at residues 28-51 (HLNDLVGTEGLYDGVDADRGSKIV) is NMP. The tract at residues 98–108 (DRGDSPEKAAE) is LID. R99 provides a ligand contact to ATP.

This sequence belongs to the adenylate kinase family. AK6 subfamily. In terms of assembly, interacts with uS11. Not a structural component of 40S pre-ribosomes, but transiently interacts with them by binding to uS11.

It carries out the reaction AMP + ATP = 2 ADP. The catalysed reaction is ATP + H2O = ADP + phosphate + H(+). Functionally, broad-specificity nucleoside monophosphate (NMP) kinase that catalyzes the reversible transfer of the terminal phosphate group between nucleoside triphosphates and monophosphates. Also has ATPase activity. Involved in the late maturation steps of the 30S ribosomal particles, specifically 16S rRNA maturation. While NMP activity is not required for ribosome maturation, ATPase activity is. Associates transiently with small ribosomal subunit protein uS11. ATP hydrolysis breaks the interaction with uS11. May temporarily remove uS11 from the ribosome to enable a conformational change of the ribosomal RNA that is needed for the final maturation step of the small ribosomal subunit. This chain is Putative adenylate kinase, found in Halobacterium salinarum (strain ATCC 29341 / DSM 671 / R1).